We begin with the raw amino-acid sequence, 373 residues long: 3-dehydroquinate synthase (373 aa).

NAD(+) is bound by residues 67 to 72 (EGEETK), 101 to 105 (GVILD), 125 to 126 (TT), lysine 138, and lysine 147. The Zn(2+) site is built by glutamate 180, histidine 240, and histidine 256.

The protein belongs to the sugar phosphate cyclases superfamily. Dehydroquinate synthase family. NAD(+) is required as a cofactor. The cofactor is Co(2+). Requires Zn(2+) as cofactor.

Its subcellular location is the cytoplasm. It carries out the reaction 7-phospho-2-dehydro-3-deoxy-D-arabino-heptonate = 3-dehydroquinate + phosphate. It functions in the pathway metabolic intermediate biosynthesis; chorismate biosynthesis; chorismate from D-erythrose 4-phosphate and phosphoenolpyruvate: step 2/7. In terms of biological role, catalyzes the conversion of 3-deoxy-D-arabino-heptulosonate 7-phosphate (DAHP) to dehydroquinate (DHQ). The chain is 3-dehydroquinate synthase from Chlamydia trachomatis serovar L2 (strain ATCC VR-902B / DSM 19102 / 434/Bu).